The following is a 386-amino-acid chain: Chaperone protein DnaJ (386 aa).

Positions 5–69 (DLYDVLGVKK…QKRAQYDQFG (65 aa)) constitute a J domain. The CR-type zinc finger occupies 140 to 224 (GKETSIKYNR…CHGAGVTEER (85 aa)). The Zn(2+) site is built by cysteine 153, cysteine 156, cysteine 170, cysteine 173, cysteine 196, cysteine 199, cysteine 212, and cysteine 215. CXXCXGXG motif repeat units lie at residues 153 to 160 (CHTCHGSG), 170 to 177 (CSTCHGQG), 196 to 203 (CPTCGGKG), and 212 to 219 (CDTCHGAG).

Belongs to the DnaJ family. Homodimer. It depends on Zn(2+) as a cofactor.

The protein localises to the cytoplasm. Functionally, participates actively in the response to hyperosmotic and heat shock by preventing the aggregation of stress-denatured proteins and by disaggregating proteins, also in an autonomous, DnaK-independent fashion. Unfolded proteins bind initially to DnaJ; upon interaction with the DnaJ-bound protein, DnaK hydrolyzes its bound ATP, resulting in the formation of a stable complex. GrpE releases ADP from DnaK; ATP binding to DnaK triggers the release of the substrate protein, thus completing the reaction cycle. Several rounds of ATP-dependent interactions between DnaJ, DnaK and GrpE are required for fully efficient folding. Also involved, together with DnaK and GrpE, in the DNA replication of plasmids through activation of initiation proteins. The protein is Chaperone protein DnaJ of Limosilactobacillus fermentum (strain NBRC 3956 / LMG 18251) (Lactobacillus fermentum).